The following is a 569-amino-acid chain: DNA-binding protein eta2 (569 aa).

2 disordered regions span residues M1–C26 and K133–R159. Residues I9–C26 show a composition bias toward polar residues. S21 carries the phosphoserine modification. Myb-like domains follow at residues L322–V371 and E377–I459. The disordered stretch occupies residues I459–K487. Residues K474 to K487 are compositionally biased toward basic residues.

The protein resides in the nucleus. The polypeptide is DNA-binding protein eta2 (eta2) (Schizosaccharomyces pombe (strain 972 / ATCC 24843) (Fission yeast)).